A 527-amino-acid polypeptide reads, in one-letter code: MSTDDWRENAKRPIRRALISVYDKTGLVELAQGLTEAGVEIVSTGSTAKVIAEKGIPVTRVEVLTGFPEVLDGRVKTLHPRVHAGLLADLRKPEHAAALEQLGIAAFELVVVNLYPFTETVDSGAGIDECVEQIDIGGPSMVRAAAKNHPSVAVVVDPLGYDGVLAAVRHGGFTLAERKRLAALAFQHTADYDIAVATWMESTLAPEHPPTTFPKWLGRSWRRSAMLRYGENPHQQASLYSDPGAWPGLAQAEQLHGKEMSYNNFTDADAAWRAAFDHEQTCVAIIKHANPCGIAISSISVADAHRKAHECDPLSAFGGVIAANTEVSVEMAEYVSTIFTEVIIAPAYQPAALEILTRKKNIRVLVASEPLTGGTELRPISGGLLVQQRDELDAHGDNPANWTLATGAPADPATLADLVFAWRVCRAVKSNAIVIAAGGATIGVGMGQVNRVDAARLAVERGGDRVRGAVAASDAFFPFPDGLETLTGAGVKAVVHPGGSVRDDEVTAAAANAGITLYLTGARHFAH.

An MGS-like domain is found at 9–156; sequence NAKRPIRRAL…KNHPSVAVVV (148 aa).

The protein belongs to the PurH family.

The enzyme catalyses (6R)-10-formyltetrahydrofolate + 5-amino-1-(5-phospho-beta-D-ribosyl)imidazole-4-carboxamide = 5-formamido-1-(5-phospho-D-ribosyl)imidazole-4-carboxamide + (6S)-5,6,7,8-tetrahydrofolate. The catalysed reaction is IMP + H2O = 5-formamido-1-(5-phospho-D-ribosyl)imidazole-4-carboxamide. It participates in purine metabolism; IMP biosynthesis via de novo pathway; 5-formamido-1-(5-phospho-D-ribosyl)imidazole-4-carboxamide from 5-amino-1-(5-phospho-D-ribosyl)imidazole-4-carboxamide (10-formyl THF route): step 1/1. The protein operates within purine metabolism; IMP biosynthesis via de novo pathway; IMP from 5-formamido-1-(5-phospho-D-ribosyl)imidazole-4-carboxamide: step 1/1. This chain is Bifunctional purine biosynthesis protein PurH, found in Mycolicibacterium paratuberculosis (strain ATCC BAA-968 / K-10) (Mycobacterium paratuberculosis).